The primary structure comprises 746 residues: Methyl-CpG-binding domain-containing protein 13 (746 aa).

2 consecutive short sequence motifs (nuclear localization signal) follow at residues 13–20 (ERKVEIRV) and 44–51 (IKKLEITN). An MBD domain is found at 29 to 104 (VIVEKSAAQG…KESDIEDDDS (76 aa)). 6 disordered regions span residues 131–157 (IDDVRRSKRRNLSSSDEHSKNCKMTSD), 169–283 (LGKK…PTPE), 295–328 (PLDDEPTPELKTRTKVQRVVPPDDEPTPELKTRT), 348–479 (TKVQ…LKSP), 518–562 (TAAG…SGSA), and 696–746 (EPDT…FSKD). Residues 169-180 (LGKKEEVKDPIE) show a composition bias toward basic and acidic residues. The span at 190–199 (RSQTKASTTE) shows a compositional bias: polar residues. Basic and acidic residues predominate over residues 244-260 (SSEKRITRSKVEEKKNE). Positions 256 to 263 (EKKNELSN) match the Nuclear localization signal motif. A compositionally biased stretch (polar residues) spans 427–451 (VAQSCNEQSSQKPHAAAATSNNRVS). The span at 465–476 (VGRKPSKDKKTL) shows a compositional bias: basic residues. 2 stretches are compositionally biased toward polar residues: residues 529-546 (PKANLTTSVKPTQISPLR) and 702-730 (KSQGMTSTTAATQEAKGRQNNCDYMTNKT). Basic and acidic residues predominate over residues 732 to 746 (GKPDDLRFTQSFSKD).

Its subcellular location is the nucleus. Its function is as follows. Probable transcriptional regulator. This Arabidopsis thaliana (Mouse-ear cress) protein is Methyl-CpG-binding domain-containing protein 13 (MBD13).